Here is a 428-residue protein sequence, read N- to C-terminus: 4-hydroxy-3-methylbut-2-en-1-yl diphosphate synthase (flavodoxin) (428 aa).

The [4Fe-4S] cluster site is built by C300, C303, C346, and E353.

This sequence belongs to the IspG family. [4Fe-4S] cluster serves as cofactor.

The catalysed reaction is (2E)-4-hydroxy-3-methylbut-2-enyl diphosphate + oxidized [flavodoxin] + H2O + 2 H(+) = 2-C-methyl-D-erythritol 2,4-cyclic diphosphate + reduced [flavodoxin]. Its pathway is isoprenoid biosynthesis; isopentenyl diphosphate biosynthesis via DXP pathway; isopentenyl diphosphate from 1-deoxy-D-xylulose 5-phosphate: step 5/6. In terms of biological role, converts 2C-methyl-D-erythritol 2,4-cyclodiphosphate (ME-2,4cPP) into 1-hydroxy-2-methyl-2-(E)-butenyl 4-diphosphate. This Methylobacillus flagellatus (strain ATCC 51484 / DSM 6875 / VKM B-1610 / KT) protein is 4-hydroxy-3-methylbut-2-en-1-yl diphosphate synthase (flavodoxin).